A 536-amino-acid polypeptide reads, in one-letter code: Pentatricopeptide repeat-containing protein At2g06000 (536 aa).

PPR repeat units lie at residues 102–136 (SFWT…GVSP), 137–167 (NNRL…SFEV), 170–200 (CCMV…HLRF), 205–239 (DTKT…GCEP), 240–274 (DIVT…SVCS), 276–310 (DVVT…GIYP), 311–345 (TNVT…GCFP), 346–380 (DVVT…GMFP), 381–415 (NAFT…DIIP), 416–450 (QPFM…KCKP), 451–485 (DKIT…GCSP), and 486–523 (DKIT…NVVP).

The protein belongs to the PPR family. P subfamily.

The sequence is that of Pentatricopeptide repeat-containing protein At2g06000 from Arabidopsis thaliana (Mouse-ear cress).